The following is a 113-amino-acid chain: Small ribosomal subunit protein bS6 (113 aa).

The protein belongs to the bacterial ribosomal protein bS6 family.

Functionally, binds together with bS18 to 16S ribosomal RNA. This Wigglesworthia glossinidia brevipalpis protein is Small ribosomal subunit protein bS6.